The sequence spans 234 residues: Phosphoribosylaminoimidazole-succinocarboxamide synthase (234 aa).

The protein belongs to the SAICAR synthetase family.

It catalyses the reaction 5-amino-1-(5-phospho-D-ribosyl)imidazole-4-carboxylate + L-aspartate + ATP = (2S)-2-[5-amino-1-(5-phospho-beta-D-ribosyl)imidazole-4-carboxamido]succinate + ADP + phosphate + 2 H(+). It functions in the pathway purine metabolism; IMP biosynthesis via de novo pathway; 5-amino-1-(5-phospho-D-ribosyl)imidazole-4-carboxamide from 5-amino-1-(5-phospho-D-ribosyl)imidazole-4-carboxylate: step 1/2. The protein is Phosphoribosylaminoimidazole-succinocarboxamide synthase of Staphylococcus epidermidis (strain ATCC 35984 / DSM 28319 / BCRC 17069 / CCUG 31568 / BM 3577 / RP62A).